The following is a 123-amino-acid chain: Large ribosomal subunit protein uL22 (123 aa).

This sequence belongs to the universal ribosomal protein uL22 family. Part of the 50S ribosomal subunit.

This protein binds specifically to 23S rRNA; its binding is stimulated by other ribosomal proteins, e.g. L4, L17, and L20. It is important during the early stages of 50S assembly. It makes multiple contacts with different domains of the 23S rRNA in the assembled 50S subunit and ribosome. In terms of biological role, the globular domain of the protein is located near the polypeptide exit tunnel on the outside of the subunit, while an extended beta-hairpin is found that lines the wall of the exit tunnel in the center of the 70S ribosome. This is Large ribosomal subunit protein uL22 from Synechococcus sp. (strain JA-3-3Ab) (Cyanobacteria bacterium Yellowstone A-Prime).